The sequence spans 555 residues: Potassium-transporting ATPase potassium-binding subunit (555 aa).

Transmembrane regions (helical) follow at residues 2 to 22 (IWVA…PTGI), 60 to 80 (QYAL…YFIF), 130 to 150 (IGIT…VMAF), 173 to 193 (VFLP…VPQT), 246 to 266 (MSNI…PFTY), 278 to 298 (ILFV…TTSE), 374 to 394 (AGFV…GLMV), 412 to 432 (LIAV…ALAL), 483 to 503 (LVMF…AASL), and 525 to 545 (GIFI…MLVL).

It belongs to the KdpA family. In terms of assembly, the system is composed of three essential subunits: KdpA, KdpB and KdpC.

The protein localises to the cell membrane. Its function is as follows. Part of the high-affinity ATP-driven potassium transport (or Kdp) system, which catalyzes the hydrolysis of ATP coupled with the electrogenic transport of potassium into the cytoplasm. This subunit binds the extracellular potassium ions and delivers the ions to the membrane domain of KdpB through an intramembrane tunnel. In Bacillus cereus (strain AH820), this protein is Potassium-transporting ATPase potassium-binding subunit.